A 347-amino-acid polypeptide reads, in one-letter code: Galactoside alpha-(1,2)-fucosyltransferase 2 (347 aa).

Over 1-5 the chain is Cytoplasmic; sequence MASAQ. A helical; Signal-anchor for type II membrane protein membrane pass occupies residues 6–26; the sequence is VPFSFPLAHFLIFVFVTSTII. The Lumenal segment spans residues 27–347; sequence HLQQRIVKLQ…PADLSPLLKH (321 aa). Residues Asn-192, Asn-258, Asn-286, and Asn-312 are each glycosylated (N-linked (GlcNAc...) asparagine).

The protein belongs to the glycosyltransferase 11 family. Expressed in stomach, colon, ovary and uterus, specifically in luminal uterine epithelium. Expressed in various tissues including heart, liver, kidney, testis, epididymis, small intestine,and cecum. Expressed in duodenum, jejunum and ileum.

Its subcellular location is the golgi apparatus. The protein localises to the golgi stack membrane. It carries out the reaction a beta-D-galactosyl-(1-&gt;3)-N-acetyl-beta-D-glucosaminyl derivative + GDP-beta-L-fucose = an alpha-L-Fuc-(1-&gt;2)-beta-D-Gal-(1-&gt;3)-beta-D-GlcNAc derivative + GDP + H(+). The enzyme catalyses a beta-D-galactosyl-(1-&gt;4)-N-acetyl-beta-D-glucosaminyl derivative + GDP-beta-L-fucose = an alpha-L-Fuc-(1-&gt;2)-beta-D-Gal-(1-&gt;4)-beta-D-GlcNAc derivative + GDP + H(+). The catalysed reaction is a neolactoside nLc4Cer + GDP-beta-L-fucose = a neolactoside IV(2)-alpha-Fuc-nLc4Cer + GDP + H(+). It catalyses the reaction a neolactoside nLc4Cer(d18:1(4E)) + GDP-beta-L-fucose = a neolactoside IV(2)-alpha-Fuc-nLc4Cer(d18:1(4E)) + GDP + H(+). It carries out the reaction a ganglioside GM1 + GDP-beta-L-fucose = a ganglioside Fuc-GM1 + GDP + H(+). The enzyme catalyses a ganglioside GA1 + GDP-beta-L-fucose = a ganglioside Fuc-GA1 + GDP + H(+). The catalysed reaction is Lc4Cer + GDP-beta-L-fucose = alpha-L-fucosyl-(1-&gt;2)-beta-D-galactosyl-(1-&gt;3)-N-acetyl-beta-D-glucosaminyl-(1-&gt;3)-beta-D-galactosyl-(1-&gt;4)-beta-D-glucosyl-(1&lt;-&gt;1')-ceramide + GDP + H(+). It catalyses the reaction a beta-D-Gal-(1-&gt;3)-beta-D-GlcNAc-(1-&gt;3)-beta-D-Gal-(1-&gt;4)-beta-D-Glc-(1&lt;-&gt;1')-Cer(d18:1(4E)) + GDP-beta-L-fucose = alpha-L-fucosyl-(1-&gt;2)- beta-D-galactosyl-(1-&gt;3)-N-acetyl-beta-D-glucosaminyl-(1-&gt;3)-beta-D-galactosyl-(1-&gt;4)-beta-D-glucosyl-(1&lt;-&gt;1')-N-acylsphing-4-enine + GDP + H(+). It carries out the reaction a ganglioside GD1b + GDP-beta-L-fucose = a ganglioside Fuc-GD1b + GDP + H(+). The enzyme catalyses a ganglioside GM1 (d18:1(4E)) + GDP-beta-L-fucose = a ganglioside Fuc-GM1 (d18:1(4E)) + GDP + H(+). The catalysed reaction is a globoside GalGb4Cer (d18:1(4E)) + GDP-beta-L-fucose = a globoside Globo-H (d18:1(4E)) + GDP + H(+). It catalyses the reaction a lactoside III(4)-a-Fuc-Lc4Cer + GDP-beta-L-fucose = a lactoside IV(2),III(4)-a-[Fuc]2-Lc4Cer + GDP + H(+). It carries out the reaction beta-D-galactosyl-(1-&gt;3)-N-acetyl-D-galactosamine + GDP-beta-L-fucose = alpha-L-fucosyl-(1-&gt;2)-beta-D-galactosyl-(1-&gt;3)-N-acetyl-D-galactosamine + GDP + H(+). The protein operates within protein modification; protein glycosylation. Its function is as follows. Catalyzes the transfer of L-fucose, from a guanosine diphosphate-beta-L-fucose, to the terminal galactose on both O- and N-linked glycans chains of cell surface glycoproteins and glycolipids and the resulting epitope regulates several processes such as cell-cell interaction including host-microbe interaction, cell surface expression and cell proliferation. Preferentially fucosylates gangliosides GA1 and GM1 in the antrum, cecum and colon and in the female reproductive organs. Fucosylated host glycoproteins or glycolipids mediate interaction with intestinal microbiota influencing its composition. Creates a soluble precursor oligosaccharide FuC-alpha ((1,2)Galbeta-) called the H antigen which is an essential substrate for the final step in the soluble ABO blood group antigen synthesis pathway. The polypeptide is Galactoside alpha-(1,2)-fucosyltransferase 2 (Mus musculus (Mouse)).